The following is a 364-amino-acid chain: Methylthioribose-1-phosphate isomerase (364 aa).

The Proton donor role is filled by aspartate 254.

It belongs to the eIF-2B alpha/beta/delta subunits family. MtnA subfamily.

The protein resides in the cytoplasm. It localises to the nucleus. The enzyme catalyses 5-(methylsulfanyl)-alpha-D-ribose 1-phosphate = 5-(methylsulfanyl)-D-ribulose 1-phosphate. It participates in amino-acid biosynthesis; L-methionine biosynthesis via salvage pathway; L-methionine from S-methyl-5-thio-alpha-D-ribose 1-phosphate: step 1/6. In terms of biological role, catalyzes the interconversion of methylthioribose-1-phosphate (MTR-1-P) into methylthioribulose-1-phosphate (MTRu-1-P). This is Methylthioribose-1-phosphate isomerase from Drosophila simulans (Fruit fly).